A 311-amino-acid chain; its full sequence is Olfactory receptor 10G4 (311 aa).

The Extracellular segment spans residues 1 to 23 (MSNASLVTAFILTGLPHAPGLDA). N-linked (GlcNAc...) asparagine glycosylation is present at N3. A helical transmembrane segment spans residues 24 to 44 (LLFGIFLVVYVLTVLGNLLIL). The Cytoplasmic portion of the chain corresponds to 45 to 52 (LVIRVDSH). Residues 53–73 (LHTPMYYFLTNLSFIDMWFST) form a helical membrane-spanning segment. Over 74–98 (VTVPKMLMTLVSPSGRAISFHSCVA) the chain is Extracellular. A disulfide bond links C96 and C188. A helical membrane pass occupies residues 99 to 119 (QLYFFHFLGSTECFLYTVMSY). The Cytoplasmic segment spans residues 120 to 138 (DRYLAISYPLRYTSMMSGS). Residues 139-159 (RCALLATGTWLSGSLHSAVQT) traverse the membrane as a helical segment. Residues 160-196 (ILTFHLPYCGPNQIQHYFCDAPPILKLACADTSANVM) lie on the Extracellular side of the membrane. Residues 197–216 (VIFVDIGIVASGCFVLIVLS) traverse the membrane as a helical segment. Residues 217 to 236 (YVSIVCSILRIRTSDGRRRA) lie on the Cytoplasmic side of the membrane. The helical transmembrane segment at 237–257 (FQTCASHCIVVLCFFVPCVVI) threads the bilayer. The Extracellular segment spans residues 258-268 (YLRPGSMDAMD). A helical transmembrane segment spans residues 269-289 (GVVAIFYTVLTPLLNPVVYTL). The Cytoplasmic segment spans residues 290–311 (RNKEVKKAVLKLRDKVAHPQRK).

It belongs to the G-protein coupled receptor 1 family.

It is found in the cell membrane. Odorant receptor. This chain is Olfactory receptor 10G4 (OR10G4), found in Homo sapiens (Human).